A 648-amino-acid polypeptide reads, in one-letter code: Serine/threonine-protein phosphatase 1 regulatory subunit PIG1 (648 aa).

The span at 20–51 shows a compositional bias: low complexity; the sequence is STSSFVSSTTSNSFSPLEDSTSASSSTSSSSS. Residues 20–52 form a disordered region; the sequence is STSSFVSSTTSNSFSPLEDSTSASSSTSSSSSG. The 131-residue stretch at 201–331 folds into the CBM21 domain; the sequence is HSLELSDPVS…NNDYKNYEIT (131 aa). The segment covering 593-609 has biased composition (polar residues); sequence RESSSPEISPLNTTTSL. Residues 593-629 are disordered; it reads RESSSPEISPLNTTTSLPFFPGDNMSDSSGEYEERTS.

Its function is as follows. Regulates the activity of glycogen synthase. It is most probably a regulatory subunit for protein phosphatase type 1. The protein is Serine/threonine-protein phosphatase 1 regulatory subunit PIG1 (PIG1) of Saccharomyces cerevisiae (strain ATCC 204508 / S288c) (Baker's yeast).